The following is a 216-amino-acid chain: Cytochrome c biogenesis ATP-binding export protein CcmA (216 aa).

Positions 2–215 constitute an ABC transporter domain; the sequence is LSVEELSCVR…SNHLRKIKLG (214 aa). Residue 34-41 participates in ATP binding; that stretch reads GHNGAGKT.

It belongs to the ABC transporter superfamily. CcmA exporter (TC 3.A.1.107) family. The complex is composed of two ATP-binding proteins (CcmA) and two transmembrane proteins (CcmB).

Its subcellular location is the cell inner membrane. It catalyses the reaction heme b(in) + ATP + H2O = heme b(out) + ADP + phosphate + H(+). Part of the ABC transporter complex CcmAB involved in the biogenesis of c-type cytochromes; once thought to export heme, this seems not to be the case, but its exact role is uncertain. Responsible for energy coupling to the transport system. This is Cytochrome c biogenesis ATP-binding export protein CcmA from Photobacterium profundum (strain SS9).